Here is a 479-residue protein sequence, read N- to C-terminus: ATP synthase subunit beta (479 aa).

153–160 (GGAGVGKT) is a binding site for ATP.

The protein belongs to the ATPase alpha/beta chains family. As to quaternary structure, F-type ATPases have 2 components, CF(1) - the catalytic core - and CF(0) - the membrane proton channel. CF(1) has five subunits: alpha(3), beta(3), gamma(1), delta(1), epsilon(1). CF(0) has three main subunits: a(1), b(2) and c(9-12). The alpha and beta chains form an alternating ring which encloses part of the gamma chain. CF(1) is attached to CF(0) by a central stalk formed by the gamma and epsilon chains, while a peripheral stalk is formed by the delta and b chains.

The protein resides in the cell membrane. It catalyses the reaction ATP + H2O + 4 H(+)(in) = ADP + phosphate + 5 H(+)(out). Functionally, produces ATP from ADP in the presence of a proton gradient across the membrane. The catalytic sites are hosted primarily by the beta subunits. This is ATP synthase subunit beta from Lactobacillus helveticus (strain DPC 4571).